A 147-amino-acid polypeptide reads, in one-letter code: MARQVFDDKLLAVISGNSIGVLATIKHDGRPQLSNVQYHFDPRKLLIQVSIAEPRAKTRNLRRDPRASILVDADDGWSYAVAEGTAQLTPPAAAPDDDTVEALIALYRNIAGEHSDWDDYRQAMVTDRRVLLTLPISHVYGLPPGMR.

Residues Gln32, Gln37, Ser50, 56–60, 77–79, and His138 contribute to the coenzyme F420-(gamma-Glu)n site; these read AKTRN and WSY.

This sequence belongs to the F420H(2)-dependent biliverdin reductase family. As to quaternary structure, homodimer.

In terms of biological role, F420H(2)-dependent reductase able to catalyze the reduction of biliverdin-IXalpha to bilirubin-IXalpha in vitro. However, kinetic parameters show that it is less efficient than the biliverdin reductase Rv2074 and suggest biliverdin-IXalpha is unlikely to be the native substrate of Rv1155, which probably catalyzes the reduction of an alternative molecule in vivo. Binds coenzyme F420, but does not bind FMN or other flavins. Cannot use pyridoxine 5'-phosphate, pyridoxamine 5'-phosphate, pyridoxal 5'-phosphate (PLP), the anti-tuberculosis drug PA-824 or aflatoxin analogs as substrates. The chain is F420H(2)-dependent reductase Rv1155 from Mycobacterium tuberculosis (strain ATCC 25618 / H37Rv).